Reading from the N-terminus, the 88-residue chain is Co-chaperonin GroES (88 aa).

Belongs to the GroES chaperonin family. Heptamer of 7 subunits arranged in a ring. Interacts with the chaperonin GroEL.

The protein localises to the cytoplasm. In terms of biological role, together with the chaperonin GroEL, plays an essential role in assisting protein folding. The GroEL-GroES system forms a nano-cage that allows encapsulation of the non-native substrate proteins and provides a physical environment optimized to promote and accelerate protein folding. GroES binds to the apical surface of the GroEL ring, thereby capping the opening of the GroEL channel. The protein is Co-chaperonin GroES of Treponema denticola (strain ATCC 35405 / DSM 14222 / CIP 103919 / JCM 8153 / KCTC 15104).